The chain runs to 938 residues: Leucine--tRNA ligase 1 (938 aa).

The 'HIGH' region motif lies at 40–50 (PYTNSPLHIGH). A 'KMSKS' region motif is present at residues 620-624 (KMSKS). K623 serves as a coordination point for ATP.

The protein belongs to the class-I aminoacyl-tRNA synthetase family.

Its subcellular location is the cytoplasm. It catalyses the reaction tRNA(Leu) + L-leucine + ATP = L-leucyl-tRNA(Leu) + AMP + diphosphate. The sequence is that of Leucine--tRNA ligase 1 from Metallosphaera sedula (strain ATCC 51363 / DSM 5348 / JCM 9185 / NBRC 15509 / TH2).